Reading from the N-terminus, the 378-residue chain is uncharacterized protein (378 aa).

Zn(2+)-binding residues include Cys38, His60, Cys90, Cys93, Cys96, and Cys104.

It belongs to the zinc-containing alcohol dehydrogenase family. Class-III subfamily. Zn(2+) is required as a cofactor.

This is an uncharacterized protein from Bacillus subtilis (strain 168).